The following is a 246-amino-acid chain: uncharacterized protein (246 aa).

Disordered stretches follow at residues 9–125 (CSRV…GAMA) and 155–203 (QPVR…EEKA). Basic residues predominate over residues 27–37 (GTRRQRQRPRQ). Pro residues-rich tracts occupy residues 54–64 (PRPPTGPPARY) and 101–117 (EPRPPPESPGAPPPPGS). The span at 161 to 176 (KLPKGKGRLRRPRQSR) shows a compositional bias: basic residues. Residue Thr-179 is modified to Phosphothreonine. A phosphoserine mark is found at Ser-196, Ser-210, and Ser-220.

Its subcellular location is the cytoplasm. This is an uncharacterized protein from Mus musculus (Mouse).